We begin with the raw amino-acid sequence, 1463 residues long: MLRNLILITLLVASGHGQTPVIGGTCKLGTADVQIGGKQTQFFLKCETTADSAEGEGVWVVKSRAAAAPSSVPSVPAENTQPQQHPKARKPASPNICEQDNGARESEVCAVSATCLQAHNDFPSSYLQCDQTTLRWVRKSCQENFLFNFEQQTCIVPKRMSSLSPSTSSPSNTENPCSKCPLGSACRNGNCIPLTTSNLCSDGSPPNNTCTRDPYSCPKGHFCTAQKVCCPSTALQSSIGCSTVCTIDESCPKGMTCQNNCCEERKLLRHPKVYRYATVEATNTIFEVDNDIFDSAAIESLPTQKPQRLDEIMAPGITPTPTRTTEPPKLRCLSSNTDEVNSLGGASSSSATCGGTNANCTSDEDCPTTFKCYQGCCKLAVCPRSLTAVKFTCKTQYHCRANEHCFFGGCCPKTIELAVIKSQVLTMSKDNEHTKETEKLIIGDCEVDTRVKKCDIDIICPEMSECVDGICCKQPPKARCGNGLMALSIPVHCSLSDDCPIASRCEYGKCCPFLSESADSTSDSVGETTPVIIKEEIISTATKVWKKVDKTSGVSINKNKCLSTQRCDLHTLCPPDFTCSLSGKCCKLNIHCPDGTVPETSCQSASNHDHCPSSSHKCTLLNKEHFACCYSPGLVVEGSVTAEVSSECPIGSVEVDPRFGTSCRYSLQCPSPYFCNQRGQQASGLVCTFSSCSNSNPCSVGTCNNGYCCSSGSNSGSAIIDSDTNSTTNPSQPETTKTKNNTKKSNSSKKHRKPKKKDVDPLSDPLLQNDFPIGPPGYGFPEHLSNLDEVLIRAQGDGVSCAGGFQSSLICSVGSECPAGLHCDTAINLCCPLLLPLTDPKNPKKRKTKRRKQKQDENEMEASANFPDSDPARFSSYSCGCMGGGSSNCVGCQNAPQIITIPQNSCPGGGYSVGGCSSGYCATGYSCIQNQCCPSYNSAPRISVYTCPSGGNAVGACMSGRCASGYTCSNNVCCPQTTTTNPFVCPDGTQAAGGCVNGQCGTGYTCSNGLCCAGTSTTVKCLDGSDAVGACIPSCTGDGCGGVQVSYYCGSGYTCTTGNICCPINSCPNGGEVLGPTINGLCPTGYTVQGNLCCSATCTDGSTGLPSVNGVCIDGYSLTNGVCCPASVTCTDEISIGPCTGTGFNGGCPAGYACDSNQVNCCPVVRYTDESCQVGPAIDGLCPPGYVVVYIPNSPLITNGVNPGTCIDLQCTTGLCLTANQIGDCDTATDAGTCPTGYTCFTNAGICCSTTTFSRLRIGNSRQMAQKPNYGRPLHSYMPPRFGGPSSSCSDGSLSSGPCMNGLCGIGLECQNGKCCSPSSNKPAGLLQSKCPSGDTAVSGCFPNGSCGTGYECVSSLNLCCPPGQPQTFPSFPGNNNGFNINNNNRFGSLSMSPRPIGARCQLDGECVGQAEGLSMCHAGVCQCSPIAYTQGIACVRRKSFQMNDDPVIDAANDDKSSSSVSV.

A signal peptide spans 1–17; sequence MLRNLILITLLVASGHG. The disordered stretch occupies residues 70–99; that stretch reads SSVPSVPAENTQPQQHPKARKPASPNICEQ. A Chitin-binding type-2 domain is found at 94–164; it reads PNICEQDNGA…IVPKRMSSLS (71 aa). Cysteines 141 and 154 form a disulfide. 2 disordered regions span residues 720 to 773 and 841 to 869; these read IDSD…DFPI and KNPK…FPDS. Over residues 722 to 734 the composition is skewed to polar residues; it reads SDTNSTTNPSQPE. 2 stretches are compositionally biased toward basic residues: residues 740 to 756 and 843 to 853; these read NNTK…KPKK and PKKRKTKRRKQ.

The sequence is that of Chitin binding domain (ChtBD2) containing chtb-1 from Caenorhabditis elegans.